Here is a 712-residue protein sequence, read N- to C-terminus: Polyribonucleotide nucleotidyltransferase (712 aa).

Positions 487 and 493 each coordinate Mg(2+). The 60-residue stretch at 554-613 folds into the KH domain; it reads PKIITMTINPDKIRDVIGPSGKQINKIIEETGVKIDIEQDGTVFISSINQEMNDKAKKII. An S1 motif domain is found at 623-691; it reads GEIYEGKVKR…KQGRVNLSRK (69 aa).

It belongs to the polyribonucleotide nucleotidyltransferase family. Mg(2+) serves as cofactor.

It is found in the cytoplasm. The catalysed reaction is RNA(n+1) + phosphate = RNA(n) + a ribonucleoside 5'-diphosphate. Functionally, involved in mRNA degradation. Catalyzes the phosphorolysis of single-stranded polyribonucleotides processively in the 3'- to 5'-direction. The protein is Polyribonucleotide nucleotidyltransferase of Bacillus cereus (strain 03BB102).